Consider the following 364-residue polypeptide: 3-isopropylmalate dehydrogenase (364 aa).

78 to 91 is an NAD(+) binding site; sequence GKKWDNFPIEERPE. The substrate site is built by Arg-99, Arg-109, Arg-138, and Asp-228. Positions 228, 252, and 256 each coordinate Mg(2+). Residue 286–298 participates in NAD(+) binding; it reads GSAPDIAGKNIAN.

This sequence belongs to the isocitrate and isopropylmalate dehydrogenases family. LeuB type 1 subfamily. Homodimer. Mg(2+) serves as cofactor. Mn(2+) is required as a cofactor.

It is found in the cytoplasm. It carries out the reaction (2R,3S)-3-isopropylmalate + NAD(+) = 4-methyl-2-oxopentanoate + CO2 + NADH. It participates in amino-acid biosynthesis; L-leucine biosynthesis; L-leucine from 3-methyl-2-oxobutanoate: step 3/4. Catalyzes the oxidation of 3-carboxy-2-hydroxy-4-methylpentanoate (3-isopropylmalate) to 3-carboxy-4-methyl-2-oxopentanoate. The product decarboxylates to 4-methyl-2 oxopentanoate. This is 3-isopropylmalate dehydrogenase from Buchnera aphidicola subsp. Uroleucon obscurum.